Reading from the N-terminus, the 179-residue chain is Large ribosomal subunit protein uL5 (179 aa).

It belongs to the universal ribosomal protein uL5 family. In terms of assembly, part of the 50S ribosomal subunit; part of the 5S rRNA/L5/L18/L25 subcomplex. Contacts the 5S rRNA and the P site tRNA. Forms a bridge to the 30S subunit in the 70S ribosome.

In terms of biological role, this is one of the proteins that bind and probably mediate the attachment of the 5S RNA into the large ribosomal subunit, where it forms part of the central protuberance. In the 70S ribosome it contacts protein S13 of the 30S subunit (bridge B1b), connecting the 2 subunits; this bridge is implicated in subunit movement. Contacts the P site tRNA; the 5S rRNA and some of its associated proteins might help stabilize positioning of ribosome-bound tRNAs. The polypeptide is Large ribosomal subunit protein uL5 (Cellvibrio japonicus (strain Ueda107) (Pseudomonas fluorescens subsp. cellulosa)).